The sequence spans 780 residues: ATP-dependent 6-phosphofructokinase, liver type (780 aa).

At Ala-2 the chain carries N-acetylalanine. The interval 2–390 (ATVDLEKLRM…NWKIYKLLAH (389 aa)) is N-terminal catalytic PFK domain 1. Residues Gly-25, 88–89 (RC), and 118–121 (GDGS) contribute to the ATP site. Asp-119 contacts Mg(2+). Substrate-binding positions include 164–166 (SID), Arg-201, 208–210 (MGR), Glu-264, Arg-292, and 298–301 (HVQR). The active-site Proton acceptor is the Asp-166. Residue Ser-377 is modified to Phosphoserine. The tract at residues 391 to 400 (QKVSKEKSNF) is interdomain linker. Residues 401 to 780 (SLAILNVGAP…RRTLSIDKGF (380 aa)) are C-terminal regulatory PFK domain 2. Residues Arg-470, 527–531 (TISNN), Arg-565, 572–574 (MGG), and Glu-628 contribute to the beta-D-fructose 2,6-bisphosphate site. O-linked (GlcNAc) serine glycosylation is present at Ser-529. A Phosphotyrosine modification is found at Tyr-640. Beta-D-fructose 2,6-bisphosphate is bound by residues Arg-654, 660–663 (HLQQ), and Arg-734. Phosphoserine is present on Ser-775.

It belongs to the phosphofructokinase type A (PFKA) family. ATP-dependent PFK group I subfamily. Eukaryotic two domain clade 'E' sub-subfamily. As to quaternary structure, homo- and heterotetramers. Phosphofructokinase (PFK) enzyme functions as a tetramer composed of different combinations of 3 types of subunits, called PFKM (M), PFKL (L) and PFKP (P). The composition of the PFK tetramer differs according to the tissue type it is present in. The kinetic and regulatory properties of the tetrameric enzyme are dependent on the subunit composition, hence can vary across tissues. It depends on Mg(2+) as a cofactor. In terms of processing, glcNAcylation at Ser-529 by OGT decreases enzyme activity, leading to redirect glucose flux through the oxidative pentose phosphate pathway. Glycosylation is stimulated by both hypoxia and glucose deprivation.

It localises to the cytoplasm. The enzyme catalyses beta-D-fructose 6-phosphate + ATP = beta-D-fructose 1,6-bisphosphate + ADP + H(+). It participates in carbohydrate degradation; glycolysis; D-glyceraldehyde 3-phosphate and glycerone phosphate from D-glucose: step 3/4. With respect to regulation, allosterically activated by ADP, AMP, or fructose 2,6-bisphosphate, and allosterically inhibited by ATP or citrate. GlcNAcylation by OGT overcomes allosteric regulation. Catalyzes the phosphorylation of D-fructose 6-phosphate to fructose 1,6-bisphosphate by ATP, the first committing step of glycolysis. Negatively regulates the phagocyte oxidative burst in response to bacterial infection by controlling cellular NADPH biosynthesis and NADPH oxidase-derived reactive oxygen species. Upon macrophage activation, drives the metabolic switch toward glycolysis, thus preventing glucose turnover that produces NADPH via pentose phosphate pathway. This chain is ATP-dependent 6-phosphofructokinase, liver type, found in Mus musculus (Mouse).